Here is a 412-residue protein sequence, read N- to C-terminus: Gamma-glutamyl phosphate reductase (412 aa).

It belongs to the gamma-glutamyl phosphate reductase family.

It is found in the cytoplasm. The catalysed reaction is L-glutamate 5-semialdehyde + phosphate + NADP(+) = L-glutamyl 5-phosphate + NADPH + H(+). Its pathway is amino-acid biosynthesis; L-proline biosynthesis; L-glutamate 5-semialdehyde from L-glutamate: step 2/2. Catalyzes the NADPH-dependent reduction of L-glutamate 5-phosphate into L-glutamate 5-semialdehyde and phosphate. The product spontaneously undergoes cyclization to form 1-pyrroline-5-carboxylate. This is Gamma-glutamyl phosphate reductase from Bartonella bacilliformis (strain ATCC 35685 / KC583 / Herrer 020/F12,63).